Reading from the N-terminus, the 405-residue chain is Argininosuccinate synthase (405 aa).

ATP is bound at residue 9–17 (AYSGGLDTS). Positions 87 and 92 each coordinate L-citrulline. Gly117 contacts ATP. Positions 119, 123, and 124 each coordinate L-aspartate. An L-citrulline-binding site is contributed by Asn123. 5 residues coordinate L-citrulline: Arg127, Ser176, Ser185, Glu262, and Tyr274.

Belongs to the argininosuccinate synthase family. Type 1 subfamily. Homotetramer.

The protein resides in the cytoplasm. It carries out the reaction L-citrulline + L-aspartate + ATP = 2-(N(omega)-L-arginino)succinate + AMP + diphosphate + H(+). Its pathway is amino-acid biosynthesis; L-arginine biosynthesis; L-arginine from L-ornithine and carbamoyl phosphate: step 2/3. The protein is Argininosuccinate synthase of Caldicellulosiruptor saccharolyticus (strain ATCC 43494 / DSM 8903 / Tp8T 6331).